The chain runs to 895 residues: Ral guanine nucleotide dissociation stimulator (895 aa).

An N-terminal Ras-GEF domain is found at 112-237 (KVRTVKAGTL…RAHLLLAQLE (126 aa)). The interval 301–324 (SELEPALEPPLDPEPTLAPAPELD) is disordered. The span at 307 to 318 (LEPPLDPEPTLA) shows a compositional bias: pro residues. In terms of domain architecture, Ras-GEF spans 367 to 629 (PPDLVAEQFT…YNLSCELEPP (263 aa)). Disordered regions lie at residues 650–669 (ERRQ…HSKS) and 708–754 (VPES…STTR). Low complexity-rich tracts occupy residues 656-667 (STELSTSSSAHS) and 726-753 (SSPE…VSTT). Positions 779 to 866 (DCCIIRVSLD…YDFILKKRAF (88 aa)) constitute a Ras-associating domain. Phosphotyrosine is present on Y795.

Interacts with RIT1 and RIT2. Interacts with TRAF3. Interacts with HRAS. Phosphorylation of Tyr-795 by MET blocks HRAS binding. Expressed in all tissues examined.

Its subcellular location is the cytoplasm. It is found in the nucleus. In terms of biological role, functions as a guanine nucleotide exchange factor (GEF) activating either RalA or RalB GTPases and plays an important role in intracellular transport. Interacts and acts as an effector molecule for R-Ras, H-Ras, K-Ras, and Rap. During bacterial clearance, recognizes 'Lys-33'-linked polyubiquitinated TRAF3 and subsequently mediates assembly of the exocyst complex. This Rattus norvegicus (Rat) protein is Ral guanine nucleotide dissociation stimulator (Ralgds).